Here is a 144-residue protein sequence, read N- to C-terminus: Small ribosomal subunit protein bS6 (144 aa).

Residues 97-144 (DTEQSLIMKSKDEKGDKPERSERRRRDDEEGDAAPAATDTDGDNAEAA) form a disordered region. Positions 105 to 124 (KSKDEKGDKPERSERRRRDD) are enriched in basic and acidic residues.

The protein belongs to the bacterial ribosomal protein bS6 family.

Binds together with bS18 to 16S ribosomal RNA. The sequence is that of Small ribosomal subunit protein bS6 from Xanthomonas campestris pv. campestris (strain 8004).